Reading from the N-terminus, the 277-residue chain is Ribosomal RNA small subunit methyltransferase A (277 aa).

6 residues coordinate S-adenosyl-L-methionine: asparagine 24, leucine 26, glycine 51, glutamate 72, aspartate 96, and asparagine 123.

It belongs to the class I-like SAM-binding methyltransferase superfamily. rRNA adenine N(6)-methyltransferase family. RsmA subfamily.

The protein localises to the cytoplasm. It carries out the reaction adenosine(1518)/adenosine(1519) in 16S rRNA + 4 S-adenosyl-L-methionine = N(6)-dimethyladenosine(1518)/N(6)-dimethyladenosine(1519) in 16S rRNA + 4 S-adenosyl-L-homocysteine + 4 H(+). In terms of biological role, specifically dimethylates two adjacent adenosines (A1518 and A1519) in the loop of a conserved hairpin near the 3'-end of 16S rRNA in the 30S particle. May play a critical role in biogenesis of 30S subunits. This chain is Ribosomal RNA small subunit methyltransferase A, found in Ureaplasma parvum serovar 3 (strain ATCC 27815 / 27 / NCTC 11736).